Consider the following 380-residue polypeptide: Erythronate-4-phosphate dehydrogenase (380 aa).

Substrate contacts are provided by Ser-45 and Thr-66. NAD(+) contacts are provided by residues Asp-146, Thr-174, 205–207 (ASR), and Asp-231. The active site involves Arg-207. The active site involves Glu-236. Residue His-253 is the Proton donor of the active site. Gly-256 serves as a coordination point for NAD(+). Tyr-257 is a substrate binding site.

This sequence belongs to the D-isomer specific 2-hydroxyacid dehydrogenase family. PdxB subfamily. In terms of assembly, homodimer.

The protein localises to the cytoplasm. It catalyses the reaction 4-phospho-D-erythronate + NAD(+) = (R)-3-hydroxy-2-oxo-4-phosphooxybutanoate + NADH + H(+). Its pathway is cofactor biosynthesis; pyridoxine 5'-phosphate biosynthesis; pyridoxine 5'-phosphate from D-erythrose 4-phosphate: step 2/5. Its function is as follows. Catalyzes the oxidation of erythronate-4-phosphate to 3-hydroxy-2-oxo-4-phosphonooxybutanoate. The sequence is that of Erythronate-4-phosphate dehydrogenase from Pseudomonas putida (strain W619).